The primary structure comprises 680 residues: DNA-directed RNA polymerase subunit beta' (680 aa).

The Zn(2+) site is built by cysteine 68, cysteine 70, cysteine 86, and cysteine 89. 3 residues coordinate Mg(2+): aspartate 488, aspartate 490, and aspartate 492.

The protein belongs to the RNA polymerase beta' chain family. RpoC1 subfamily. In plastids the minimal PEP RNA polymerase catalytic core is composed of four subunits: alpha, beta, beta', and beta''. When a (nuclear-encoded) sigma factor is associated with the core the holoenzyme is formed, which can initiate transcription. Mg(2+) is required as a cofactor. It depends on Zn(2+) as a cofactor.

Its subcellular location is the plastid. The protein localises to the chloroplast. The catalysed reaction is RNA(n) + a ribonucleoside 5'-triphosphate = RNA(n+1) + diphosphate. Its function is as follows. DNA-dependent RNA polymerase catalyzes the transcription of DNA into RNA using the four ribonucleoside triphosphates as substrates. The polypeptide is DNA-directed RNA polymerase subunit beta' (Nicotiana tabacum (Common tobacco)).